We begin with the raw amino-acid sequence, 94 residues long: Large ribosomal subunit protein bL27 (94 aa).

Residues 1-9 constitute a propeptide that is removed on maturation; it reads MLKLNLQFF. Positions 12 to 32 are disordered; that stretch reads KKGVSSTKNGRDSESKRLGAK. Residues 20-32 show a composition bias toward basic and acidic residues; that stretch reads NGRDSESKRLGAK.

It belongs to the bacterial ribosomal protein bL27 family. In terms of processing, the N-terminus is cleaved by ribosomal processing cysteine protease Prp.

The protein is Large ribosomal subunit protein bL27 of Staphylococcus carnosus (strain TM300).